Here is a 268-residue protein sequence, read N- to C-terminus: Ubiquinone/menaquinone biosynthesis C-methyltransferase UbiE (268 aa).

The interval 1–23 (MTDQHAFATEQVQLDPTLSPTTE) is disordered. Over residues 10-23 (EQVQLDPTLSPTTE) the composition is skewed to polar residues. S-adenosyl-L-methionine-binding positions include T91, D112, 140-141 (NA), and S157.

This sequence belongs to the class I-like SAM-binding methyltransferase superfamily. MenG/UbiE family.

The catalysed reaction is a 2-demethylmenaquinol + S-adenosyl-L-methionine = a menaquinol + S-adenosyl-L-homocysteine + H(+). It catalyses the reaction a 2-methoxy-6-(all-trans-polyprenyl)benzene-1,4-diol + S-adenosyl-L-methionine = a 5-methoxy-2-methyl-3-(all-trans-polyprenyl)benzene-1,4-diol + S-adenosyl-L-homocysteine + H(+). It functions in the pathway quinol/quinone metabolism; menaquinone biosynthesis; menaquinol from 1,4-dihydroxy-2-naphthoate: step 2/2. The protein operates within cofactor biosynthesis; ubiquinone biosynthesis. Functionally, methyltransferase required for the conversion of demethylmenaquinol (DMKH2) to menaquinol (MKH2) and the conversion of 2-polyprenyl-6-methoxy-1,4-benzoquinol (DDMQH2) to 2-polyprenyl-3-methyl-6-methoxy-1,4-benzoquinol (DMQH2). The chain is Ubiquinone/menaquinone biosynthesis C-methyltransferase UbiE from Pasteurella multocida (strain Pm70).